Reading from the N-terminus, the 130-residue chain is L-ectoine synthase (130 aa).

Belongs to the ectoine synthase family.

It catalyses the reaction (2S)-4-acetamido-2-aminobutanoate = L-ectoine + H2O. It functions in the pathway amine and polyamine biosynthesis; ectoine biosynthesis; L-ectoine from L-aspartate 4-semialdehyde: step 3/3. In terms of biological role, catalyzes the circularization of gamma-N-acetyl-alpha,gamma-diaminobutyric acid (ADABA) to ectoine (1,4,5,6-tetrahydro-2-methyl-4-pyrimidine carboxylic acid), which is an excellent osmoprotectant. The chain is L-ectoine synthase from Mycolicibacterium gilvum (strain PYR-GCK) (Mycobacterium gilvum (strain PYR-GCK)).